Reading from the N-terminus, the 329-residue chain is Vitamin B12 import system permease protein BtuC (329 aa).

9 helical membrane-spanning segments follow: residues Leu-22–Ala-42, Leu-64–Phe-84, Pro-91–Gly-111, Leu-115–Leu-135, Leu-149–Phe-169, Gly-187–Ile-207, Gly-243–Ile-263, Ala-277–Ala-297, and Glu-305–Leu-325.

It belongs to the binding-protein-dependent transport system permease family. FecCD subfamily. As to quaternary structure, the complex is composed of two ATP-binding proteins (BtuD), two transmembrane proteins (BtuC) and a solute-binding protein (BtuF).

Its subcellular location is the cell inner membrane. Part of the ABC transporter complex BtuCDF involved in vitamin B12 import. Involved in the translocation of the substrate across the membrane. This Citrobacter koseri (strain ATCC BAA-895 / CDC 4225-83 / SGSC4696) protein is Vitamin B12 import system permease protein BtuC.